Here is a 907-residue protein sequence, read N- to C-terminus: Protein translocase subunit SecA (907 aa).

Residues glutamine 87, 105-109, and aspartate 512 each bind ATP; that span reads GEGKT. Residues 834 to 907 form a disordered region; that stretch reads QSDVDDMEQR…KYKQCHGKLS (74 aa). Positions 840 to 856 are enriched in basic and acidic residues; the sequence is MEQRRREEEAKIQRDYQ. Residues 865–876 show a composition bias toward polar residues; it reads DESQASSDNTPK. Residues 878-887 are compositionally biased toward basic and acidic residues; the sequence is MIREGDKVGR. Zn(2+)-binding residues include cysteine 891, cysteine 893, cysteine 902, and histidine 903. The span at 897 to 907 shows a compositional bias: basic residues; the sequence is KKYKQCHGKLS.

The protein belongs to the SecA family. Monomer and homodimer. Part of the essential Sec protein translocation apparatus which comprises SecA, SecYEG and auxiliary proteins SecDF-YajC and YidC. Zn(2+) is required as a cofactor.

The protein resides in the cell inner membrane. It is found in the cytoplasm. The enzyme catalyses ATP + H2O + cellular proteinSide 1 = ADP + phosphate + cellular proteinSide 2.. Part of the Sec protein translocase complex. Interacts with the SecYEG preprotein conducting channel. Has a central role in coupling the hydrolysis of ATP to the transfer of proteins into and across the cell membrane, serving both as a receptor for the preprotein-SecB complex and as an ATP-driven molecular motor driving the stepwise translocation of polypeptide chains across the membrane. In Shewanella denitrificans (strain OS217 / ATCC BAA-1090 / DSM 15013), this protein is Protein translocase subunit SecA.